Consider the following 109-residue polypeptide: Nucleoid-associated protein Asuc_0997 (109 aa).

The disordered stretch occupies residues Met-1–Lys-23.

This sequence belongs to the YbaB/EbfC family. Homodimer.

It is found in the cytoplasm. The protein localises to the nucleoid. Its function is as follows. Binds to DNA and alters its conformation. May be involved in regulation of gene expression, nucleoid organization and DNA protection. In Actinobacillus succinogenes (strain ATCC 55618 / DSM 22257 / CCUG 43843 / 130Z), this protein is Nucleoid-associated protein Asuc_0997.